The following is a 663-amino-acid chain: Meiotically up-regulated gene 60 protein (663 aa).

The KH domain occupies 578 to 644 (PAEMHFYVPE…SENLWAVRSL (67 aa)).

It localises to the cytoplasm. The protein localises to the nucleus. Its subcellular location is the cytoskeleton. The protein resides in the microtubule organizing center. It is found in the spindle pole body. Functionally, has a role in meiosis. The protein is Meiotically up-regulated gene 60 protein (mug60) of Schizosaccharomyces pombe (strain 972 / ATCC 24843) (Fission yeast).